The chain runs to 784 residues: Lon protease (784 aa).

The 202-residue stretch at 6–207 (LPLMALRDMV…TVITTLTSNI (202 aa)) folds into the Lon N-terminal domain. Residue 356-363 (GPPGVGKT) participates in ATP binding. The Lon proteolytic domain maps to 592–773 (EDQIGSTTGL…DQVLKHALVE (182 aa)). Residues S679 and K722 contribute to the active site.

Belongs to the peptidase S16 family. Homohexamer. Organized in a ring with a central cavity.

It is found in the cytoplasm. It carries out the reaction Hydrolysis of proteins in presence of ATP.. In terms of biological role, ATP-dependent serine protease that mediates the selective degradation of mutant and abnormal proteins as well as certain short-lived regulatory proteins. Required for cellular homeostasis and for survival from DNA damage and developmental changes induced by stress. Degrades polypeptides processively to yield small peptide fragments that are 5 to 10 amino acids long. Binds to DNA in a double-stranded, site-specific manner. This Rickettsia prowazekii (strain Madrid E) protein is Lon protease.